A 431-amino-acid polypeptide reads, in one-letter code: Alpha-gurjunene synthase (431 aa).

Residues Asp126 and Asp130 each coordinate Mg(2+). Arg267 is a binding site for (2E,6E)-farnesyl diphosphate. Mg(2+)-binding residues include Asn321 and Ser325. (2E,6E)-farnesyl diphosphate is bound at residue Lys328. A Mg(2+)-binding site is contributed by Glu329. 412–413 (RY) provides a ligand contact to (2E,6E)-farnesyl diphosphate.

It belongs to the terpene synthase family. Requires Mg(2+) as cofactor.

It catalyses the reaction (2E,6E)-farnesyl diphosphate = (-)-alpha-gurjunene + diphosphate. It carries out the reaction (2E,6E)-farnesyl diphosphate + H2O = 5-hydroxy-alpha-gurjunene + diphosphate. Its pathway is secondary metabolite biosynthesis; terpenoid biosynthesis. Functionally, catalyzes the conversion of (2E,6E)-farnesyl diphosphate (FPP) into the sesquiterpene alcohols (-)-alpha-gurjunene and 5-hydroxy-alpha-gurjunene. Other unidentified sesquiterpene alcohols found to be catalyzed by MTPSL4 may arise from carbocation reaction intermediates along the catalytic cascade to gurjunene being quenched by a water molecule, yielding formation of the alcohols. The sequence is that of Alpha-gurjunene synthase from Marchantia polymorpha (Common liverwort).